Reading from the N-terminus, the 434-residue chain is uncharacterized protein (434 aa).

11 helical membrane-spanning segments follow: residues 50 to 70 (GSIAFGLSIGFVASVGISFTL), 72 to 92 (TGLLNAWLLFLPTDILGVLAI), 95 to 115 (LMAFGLGAIWGVLILTCLLPV), 135 to 155 (SPVVSAFALFPLVAIFYQFGW), 158 to 178 (SLIAAVVVLMTRVVVVRYFPH), 179 to 199 (LNPESIEIFIGMVMLLGIAIT), 229 to 249 (LPYIAIVGALIAAVASMKIFA), 288 to 308 (GFVPLIATTALATGVYAVAGF), 319 to 339 (PNPMVAAVLGAVVISAEVLLL), 376 to 396 (IFAAIKMAGYTGFSIAVAIYF), and 412 to 432 (VVAVMITGILLNVLYWLGLFV).

Its subcellular location is the cell membrane. This is an uncharacterized protein from Escherichia coli (strain K12).